A 288-amino-acid polypeptide reads, in one-letter code: UTP--glucose-1-phosphate uridylyltransferase (288 aa).

This sequence belongs to the UDPGP type 2 family.

The enzyme catalyses alpha-D-glucose 1-phosphate + UTP + H(+) = UDP-alpha-D-glucose + diphosphate. The protein operates within glycolipid metabolism; diglucosyl-diacylglycerol biosynthesis. Catalyzes the formation of UDP-glucose from glucose-1-phosphate and UTP. This is an intermediate step in the biosynthesis of diglucosyl-diacylglycerol (Glc2-DAG), i.e. the predominant glycolipid found in the S.aureus membrane, which is also used as a membrane anchor for lipoteichoic acid (LTA). The sequence is that of UTP--glucose-1-phosphate uridylyltransferase (gtaB) from Staphylococcus aureus (strain USA300).